Here is a 2561-residue protein sequence, read N- to C-terminus: Plipastatin synthase subunit A (2561 aa).

Positions 1-1038 (MSEHTYSLTH…ATVIREGTDS (1038 aa)) are domain 1 (glutamate-activating). The segment at 2–300 (SEHTYSLTHA…SSLPIRITVD (299 aa)) is condensation 1. The interval 485–888 (TYAELDMYAS…SIEGVREAAV (404 aa)) is adenylation 1. One can recognise a Carrier 1 domain in the interval 961–1036 (APRNVTEMKL…GLATVIREGT (76 aa)). O-(pantetheine 4'-phosphoryl)serine is present on serine 996. Positions 1048–1338 (KQETYPVSSA…NTLALRTRPE (291 aa)) are condensation 2. The tract at residues 1048–2554 (KQETYPVSSA…ELTLSALSSI (1507 aa)) is domain 2 (D-ornithine-activating). The interval 1525–1932 (SYRLLNERAN…QTGLVREAAV (408 aa)) is adenylation 2. The Carrier 2 domain occupies 2007–2081 (APVNDLQKTM…ELCGHITPLA (75 aa)). Serine 2042 bears the O-(pantetheine 4'-phosphoryl)serine mark. The interval 2089-2554 (AEGEAELTPI…ELTLSALSSI (466 aa)) is epimerization.

Belongs to the ATP-dependent AMP-binding enzyme family. It depends on pantetheine 4'-phosphate as a cofactor.

Its function is as follows. This protein is a multifunctional enzyme, able to activate and polymerize the amino acids Glu and Orn as part of the biosynthesis of the lipopeptide antibiotic lipastatin. The Orn residue is further epimerized to the D-isomer form. The activation sites for these amino acids consist of individual domains. The protein is Plipastatin synthase subunit A (ppsA) of Bacillus subtilis (strain 168).